The primary structure comprises 71 residues: Small ribosomal subunit protein bS18c (71 aa).

Belongs to the bacterial ribosomal protein bS18 family. As to quaternary structure, part of the 30S ribosomal subunit.

It localises to the plastid. It is found in the chloroplast. This is Small ribosomal subunit protein bS18c (rps18) from Mesostigma viride (Green alga).